The sequence spans 78 residues: Large ribosomal subunit protein uL29 (78 aa).

This sequence belongs to the universal ribosomal protein uL29 family.

This Crocosphaera subtropica (strain ATCC 51142 / BH68) (Cyanothece sp. (strain ATCC 51142)) protein is Large ribosomal subunit protein uL29.